The primary structure comprises 340 residues: Glycerol-3-phosphate dehydrogenase [NAD(P)+] (340 aa).

Residues Ser14, Trp15, and Lys109 each coordinate NADPH. The sn-glycerol 3-phosphate site is built by Lys109, Gly140, and Ser142. Residue Ala144 coordinates NADPH. Lys195, Asp248, Ser258, Arg259, and Asn260 together coordinate sn-glycerol 3-phosphate. The active-site Proton acceptor is the Lys195. Residue Arg259 participates in NADPH binding. Val283 and Glu285 together coordinate NADPH.

The protein belongs to the NAD-dependent glycerol-3-phosphate dehydrogenase family.

The protein resides in the cytoplasm. The enzyme catalyses sn-glycerol 3-phosphate + NAD(+) = dihydroxyacetone phosphate + NADH + H(+). It catalyses the reaction sn-glycerol 3-phosphate + NADP(+) = dihydroxyacetone phosphate + NADPH + H(+). It functions in the pathway membrane lipid metabolism; glycerophospholipid metabolism. In terms of biological role, catalyzes the reduction of the glycolytic intermediate dihydroxyacetone phosphate (DHAP) to sn-glycerol 3-phosphate (G3P), the key precursor for phospholipid synthesis. The sequence is that of Glycerol-3-phosphate dehydrogenase [NAD(P)+] from Syntrophobacter fumaroxidans (strain DSM 10017 / MPOB).